The primary structure comprises 607 residues: MGIRKKLVQSLLFNSISQNNFGLILQNNLFGKADAVIFDHMLVMHSMCFVPISPGMDAREHIITNTLNFYTRYSKTIATASTLFILCEDGLQSVKPAVRDKRNEHVPTPALVYFKHHKAELAKALVEKMQMEGICTLFITGYNGRSMSYQYMNGTGKRPAVPVELVMDRFVADCKEVEADMMMYAMAAHYSRRYPGHLVVITTRDTDVVPSGLALLADKGPEYLGNTVIEFKTPMFNGLKDHDRAVSDFLHVSNPTNSHKLILNRFAQFTPQRFFKADGFGGGTIEGGLFNLLFDSTNISPFAALIDKFVQTTASLDAEELLGIIRFFIACLRAGFRGTIFRRIFMRYLDDDPSTRETVTKFMGAMDTAADKYALLGDFLSQTNSYIANRTIKQLSPDYDWDIIDDADQSDGLGNCTLGQPYMVTTTSLSNRCIKGLVSLAKMYNEHRLPLDSYGSYIRMQTTHGHCYVRFAPVKASTAAVVACTLAGADYNLTIPKLGSVQIMNLLLNPDFIEMCEKTRFSVEEHGAEFIWKMISMTKLRKKTPVDPGLDGYIDCVWRTLCYTIQTWQLKTPVAGPDYGFNVRDSMVYFVIDDPSAFKNVFTLGRK.

This is an uncharacterized protein from Ictalurid herpesvirus 1 (strain Auburn) (IcHV-1).